The following is a 661-amino-acid chain: Peroxisomal acyl-coenzyme A oxidase 1 (661 aa).

Ser26 carries the phosphoserine modification. The residue at position 65 (Lys65) is an N6-acetyllysine. N6-succinyllysine is present on Lys89. Position 139 (Thr139) interacts with FAD. At Lys159 the chain carries N6-succinyllysine. Gly178 lines the FAD pocket. At Lys216 the chain carries N6-acetyllysine. Lys241 is modified (N6-succinyllysine). Lys255, Lys267, and Lys272 each carry N6-acetyllysine. Lys349 carries the N6-succinyllysine modification. Glu421 (proton acceptor) is an active-site residue. 2 positions are modified to N6-acetyllysine; alternate: Lys437 and Lys446. Lys437 and Lys446 each carry N6-succinyllysine; alternate. Lys500 is modified (N6-acetyllysine). Residue Lys512 is modified to N6-acetyllysine; alternate. At Lys512 the chain carries N6-succinyllysine; alternate. Lys542 carries the N6-succinyllysine modification. At Lys637 the chain carries N6-acetyllysine; alternate. N6-succinyllysine; alternate is present on Lys637. The residue at position 643 (Lys643) is an N6-succinyllysine. The residue at position 649 (Ser649) is a Phosphoserine. Lys652 bears the N6-acetyllysine mark. Residue Lys655 is modified to N6-succinyllysine. The Microbody targeting signal signature appears at 659-661; that stretch reads SKL.

Belongs to the acyl-CoA oxidase family. Homodimer. Interacts with LONP2. It depends on FAD as a cofactor.

It localises to the peroxisome. The catalysed reaction is a 2,3-saturated acyl-CoA + O2 = a (2E)-enoyl-CoA + H2O2. It catalyses the reaction hexadecanoyl-CoA + O2 = (2E)-hexadecenoyl-CoA + H2O2. It carries out the reaction dodecanoyl-CoA + O2 = (2E)-dodecenoyl-CoA + H2O2. The enzyme catalyses octanoyl-CoA + O2 = (2E)-octenoyl-CoA + H2O2. The catalysed reaction is decanoyl-CoA + O2 = (2E)-decenoyl-CoA + H2O2. It catalyses the reaction tetradecanoyl-CoA + O2 = (2E)-tetradecenoyl-CoA + H2O2. It carries out the reaction hexadecanedioyl-CoA + O2 = (2E)-hexadecenedioyl-CoA + H2O2. The enzyme catalyses tetracosanoyl-CoA + O2 = (2E)-tetracosenoyl-CoA + H2O2. The catalysed reaction is glutaryl-CoA + O2 = (2E)-glutaconyl-CoA + H2O2. It catalyses the reaction hexanoyl-CoA + O2 = (2E)-hexenoyl-CoA + H2O2. It carries out the reaction octadecanoyl-CoA + O2 = (2E)-octadecenoyl-CoA + H2O2. The enzyme catalyses (5Z,8Z,11Z,14Z,17Z)-eicosapentaenoyl-CoA + O2 = (2E,5Z,8Z,11Z,14Z,17Z)-icosahexaenoyl-CoA + H2O2. The catalysed reaction is (6Z,9Z,12Z,15Z,18Z,21Z)-tetracosahexaenoyl-CoA + O2 = (2E,6Z,9Z,12Z,15Z,18Z,21Z)-tetracosaheptaenoyl-CoA + H2O2. It participates in lipid metabolism; peroxisomal fatty acid beta-oxidation. In terms of biological role, involved in the initial and rate-limiting step of peroxisomal beta-oxidation of straight-chain saturated and unsaturated very-long-chain fatty acids. Catalyzes the desaturation of fatty acyl-CoAs such as palmitoyl-CoA (hexadecanoyl-CoA) to 2-trans-enoyl-CoAs ((2E)-enoyl-CoAs) such as (2E)-hexadecenoyl-CoA, and donates electrons directly to molecular oxygen (O(2)), thereby producing hydrogen peroxide (H(2)O(2)). The protein is Peroxisomal acyl-coenzyme A oxidase 1 of Cavia porcellus (Guinea pig).